Reading from the N-terminus, the 372-residue chain is N-methyl-L-tryptophan oxidase (372 aa).

Residue 4–34 (DLIIIGSGSVGAAAGYYATRAGLNVLMTDAH) coordinates FAD. C308 is subject to S-8alpha-FAD cysteine.

It belongs to the MSOX/MTOX family. MTOX subfamily. As to quaternary structure, monomer. FAD is required as a cofactor.

It carries out the reaction N(alpha)-methyl-L-tryptophan + O2 + H2O = L-tryptophan + formaldehyde + H2O2. Functionally, catalyzes the oxidative demethylation of N-methyl-L-tryptophan. This is N-methyl-L-tryptophan oxidase from Shigella flexneri serotype 5b (strain 8401).